A 287-amino-acid chain; its full sequence is Nucleotide-binding protein VV0445 (287 aa).

G8–S15 provides a ligand contact to ATP. D56–N59 serves as a coordination point for GTP.

Belongs to the RapZ-like family.

Its function is as follows. Displays ATPase and GTPase activities. This chain is Nucleotide-binding protein VV0445, found in Vibrio vulnificus (strain YJ016).